Consider the following 459-residue polypeptide: Putrescine aminotransferase (459 aa).

Residues 150-151 (GT) and Q274 contribute to the pyridoxal 5'-phosphate site. The residue at position 300 (K300) is an N6-(pyridoxal phosphate)lysine. T332 is a binding site for pyridoxal 5'-phosphate.

Belongs to the class-III pyridoxal-phosphate-dependent aminotransferase family. Putrescine aminotransferase subfamily. Pyridoxal 5'-phosphate is required as a cofactor.

It catalyses the reaction an alkane-alpha,omega-diamine + 2-oxoglutarate = an omega-aminoaldehyde + L-glutamate. The catalysed reaction is putrescine + 2-oxoglutarate = 1-pyrroline + L-glutamate + H2O. The enzyme catalyses cadaverine + 2-oxoglutarate = 5-aminopentanal + L-glutamate. Its pathway is amine and polyamine degradation; putrescine degradation; 4-aminobutanal from putrescine (transaminase route): step 1/1. In terms of biological role, catalyzes the aminotransferase reaction from putrescine to 2-oxoglutarate, leading to glutamate and 4-aminobutanal, which spontaneously cyclizes to form 1-pyrroline. This is the first step in one of two pathways for putrescine degradation, where putrescine is converted into 4-aminobutanoate (gamma-aminobutyrate or GABA) via 4-aminobutanal. Also functions as a cadaverine transaminase in a a L-lysine degradation pathway to succinate that proceeds via cadaverine, glutarate and L-2-hydroxyglutarate. The chain is Putrescine aminotransferase from Escherichia coli (strain K12 / MC4100 / BW2952).